The chain runs to 496 residues: Probable cytosol aminopeptidase (496 aa).

Mn(2+)-binding residues include lysine 257 and aspartate 262. Lysine 269 is a catalytic residue. The Mn(2+) site is built by aspartate 281, aspartate 341, and glutamate 343. Arginine 345 is a catalytic residue.

Belongs to the peptidase M17 family. Requires Mn(2+) as cofactor.

It localises to the cytoplasm. It catalyses the reaction Release of an N-terminal amino acid, Xaa-|-Yaa-, in which Xaa is preferably Leu, but may be other amino acids including Pro although not Arg or Lys, and Yaa may be Pro. Amino acid amides and methyl esters are also readily hydrolyzed, but rates on arylamides are exceedingly low.. The enzyme catalyses Release of an N-terminal amino acid, preferentially leucine, but not glutamic or aspartic acids.. Functionally, presumably involved in the processing and regular turnover of intracellular proteins. Catalyzes the removal of unsubstituted N-terminal amino acids from various peptides. This is Probable cytosol aminopeptidase from Prochlorococcus marinus (strain SARG / CCMP1375 / SS120).